Consider the following 1035-residue polypeptide: Condensin complex subunit 3 (1035 aa).

HEAT repeat units follow at residues 113 to 150 and 153 to 191; these read RFVDQFIRHVLRGVESPDKNVRFRVLQLLAVIMDNIGE and ESLFNLLILSLNKRIYDREPTVRIQAVFCLTKFQDEEQT. Serine 198 is subject to Phosphoserine. The HEAT 3 repeat unit spans residues 201–239; that stretch reads EENFEATRTLVASIQNDPSAEVRRAAMLNLINDNNTRPY. The disordered stretch occupies residues 500 to 536; it reads EEKIKSKKINRRNETSVDEEDENGTHNDEVNEDEEDD. HEAT repeat units follow at residues 597-635 and 827-864; these read ILIASLMDTLITPAVRNTAPNIRELGVKNLGLCCLLDVK and VQLTFLIDVLKIYAQIEKKEIKKMIITNINAIFLSSEQ. Basic and acidic residues predominate over residues 909–919; it reads ERSETQTKDEN. Disordered stretches follow at residues 909–934 and 959–995; these read ERSETQTKDENNTANDQYSSILGNSF and TTVNISAVDNTTEQSNSRKRTRSEAEQIDTSKNLENM. 2 stretches are compositionally biased toward polar residues: residues 920–934 and 959–973; these read NTANDQYSSILGNSF and TTVNISAVDNTTEQS. Serine 933 is modified (phosphoserine). Serine 981 carries the phosphoserine modification. The segment covering 986–995 has biased composition (polar residues); the sequence is IDTSKNLENM. Serine 1008 is modified (phosphoserine). The disordered stretch occupies residues 1012-1035; it reads PDEKSDAMSIDEEDKDSESFSEVC.

This sequence belongs to the CND3 (condensin subunit 3) family. As to quaternary structure, component of the condensin complex, which contains the SMC2 and SMC4 heterodimer, and three non SMC subunits that probably regulate the complex: BRN1, YCS4 and YCG1/YCS5.

Its subcellular location is the nucleus. The protein resides in the cytoplasm. It is found in the chromosome. Its function is as follows. Regulatory subunit of the condensin complex, a complex required for conversion of interphase chromatin into mitotic-like condense chromosomes. The condensin complex probably introduces positive supercoils into relaxed DNA in the presence of type I topoisomerases and converts nicked DNA into positive knotted forms in the presence of type II topoisomerases. The condensin complex probably also plays a role during interphase. The chain is Condensin complex subunit 3 (YCG1) from Saccharomyces cerevisiae (strain ATCC 204508 / S288c) (Baker's yeast).